The chain runs to 125 residues: Small ribosomal subunit protein bS6 (125 aa).

Belongs to the bacterial ribosomal protein bS6 family.

Functionally, binds together with bS18 to 16S ribosomal RNA. This Campylobacter jejuni subsp. jejuni serotype O:23/36 (strain 81-176) protein is Small ribosomal subunit protein bS6.